The primary structure comprises 94 residues: Defensin-like protein 21 (94 aa).

The signal sequence occupies residues 1 to 26 (MVRTNVVSFVLFAAIVLCIGSIQIDG). Disulfide bonds link Cys41–Cys92, Cys51–Cys79, Cys65–Cys88, and Cys69–Cys90.

This sequence belongs to the DEFL family.

The protein resides in the secreted. The sequence is that of Defensin-like protein 21 from Arabidopsis thaliana (Mouse-ear cress).